The primary structure comprises 334 residues: Ornithine carbamoyltransferase, catabolic (334 aa).

Residues Ser57–Thr60, Gln84, Arg108, and His135–Gln138 contribute to the carbamoyl phosphate site. L-ornithine contacts are provided by residues Asn168, Asp232, and Ser236 to Met237. Carbamoyl phosphate contacts are provided by residues Cys274–Leu275 and Arg320.

Belongs to the aspartate/ornithine carbamoyltransferase superfamily. OTCase family.

It is found in the cytoplasm. It carries out the reaction carbamoyl phosphate + L-ornithine = L-citrulline + phosphate + H(+). It functions in the pathway amino-acid degradation; L-arginine degradation via ADI pathway; carbamoyl phosphate from L-arginine: step 2/2. In terms of biological role, reversibly catalyzes the transfer of the carbamoyl group from carbamoyl phosphate (CP) to the N(epsilon) atom of ornithine (ORN) to produce L-citrulline. The protein is Ornithine carbamoyltransferase, catabolic (arcB) of Rhizobium meliloti (strain 1021) (Ensifer meliloti).